We begin with the raw amino-acid sequence, 471 residues long: Glutamyl-tRNA(Gln) amidotransferase subunit A, mitochondrial (471 aa).

Active-site charge relay system residues include K64 and S141. S165 (acyl-ester intermediate) is an active-site residue.

It belongs to the amidase family. GatA subfamily. Subunit of the heterotrimeric GatCAB amidotransferase (AdT) complex, composed of A, B and C subunits.

It is found in the mitochondrion. The catalysed reaction is L-glutamyl-tRNA(Gln) + L-glutamine + ATP + H2O = L-glutaminyl-tRNA(Gln) + L-glutamate + ADP + phosphate + H(+). Its function is as follows. Allows the formation of correctly charged Gln-tRNA(Gln) through the transamidation of misacylated Glu-tRNA(Gln) in the mitochondria. The reaction takes place in the presence of glutamine and ATP through an activated gamma-phospho-Glu-tRNA(Gln). The sequence is that of Glutamyl-tRNA(Gln) amidotransferase subunit A, mitochondrial from Schizosaccharomyces pombe (strain 972 / ATCC 24843) (Fission yeast).